A 384-amino-acid polypeptide reads, in one-letter code: ATP phosphoribosyltransferase regulatory subunit (384 aa).

The protein belongs to the class-II aminoacyl-tRNA synthetase family. HisZ subfamily. As to quaternary structure, heteromultimer composed of HisG and HisZ subunits.

The protein localises to the cytoplasm. It participates in amino-acid biosynthesis; L-histidine biosynthesis; L-histidine from 5-phospho-alpha-D-ribose 1-diphosphate: step 1/9. Functionally, required for the first step of histidine biosynthesis. May allow the feedback regulation of ATP phosphoribosyltransferase activity by histidine. The sequence is that of ATP phosphoribosyltransferase regulatory subunit from Rhodospirillum rubrum (strain ATCC 11170 / ATH 1.1.1 / DSM 467 / LMG 4362 / NCIMB 8255 / S1).